Reading from the N-terminus, the 149-residue chain is FAD synthase (149 aa).

Residues 10–11 (TF), 15–18 (HPGH), aspartate 95, and tyrosine 123 each bind ATP.

It belongs to the archaeal FAD synthase family. In terms of assembly, homodimer. It depends on Co(2+) as a cofactor.

The enzyme catalyses FMN + ATP + H(+) = FAD + diphosphate. It participates in cofactor biosynthesis; FAD biosynthesis; FAD from FMN: step 1/1. Its activity is regulated as follows. Is inhibited by the product PPi. In terms of biological role, catalyzes the transfer of the AMP portion of ATP to flavin mononucleotide (FMN) to produce flavin adenine dinucleotide (FAD) coenzyme. To a lesser extent, is also able to utilize other nucleotides such as CTP and GTP as substrates, producing the modified coenzymes, flavin cytosine dinucleotide (FCD) and flavin guanine dinucleotide (FGD), respectively. Does not catalyze the reverse reaction to produce FMN and ATP from FAD and PPi. Does not function as a glycerol-3-phosphate cytidylyltransferase, as previously annotated in the complete genome. The protein is FAD synthase (ribL) of Methanocaldococcus jannaschii (strain ATCC 43067 / DSM 2661 / JAL-1 / JCM 10045 / NBRC 100440) (Methanococcus jannaschii).